The following is a 524-amino-acid chain: Glucose-6-phosphate isomerase (524 aa).

Glutamate 322 functions as the Proton donor in the catalytic mechanism. Catalysis depends on residues histidine 351 and lysine 453.

Belongs to the GPI family.

Its subcellular location is the cytoplasm. The catalysed reaction is alpha-D-glucose 6-phosphate = beta-D-fructose 6-phosphate. It functions in the pathway carbohydrate biosynthesis; gluconeogenesis. Its pathway is carbohydrate degradation; glycolysis; D-glyceraldehyde 3-phosphate and glycerone phosphate from D-glucose: step 2/4. Catalyzes the reversible isomerization of glucose-6-phosphate to fructose-6-phosphate. This chain is Glucose-6-phosphate isomerase, found in Prochlorococcus marinus (strain NATL2A).